A 235-amino-acid chain; its full sequence is Ribitol-5-phosphate cytidylyltransferase (235 aa).

CTP-binding positions include 7–10 (LAGG), 82–88 (GADRNTS), and serine 113.

Belongs to the IspD/TarI cytidylyltransferase family. TarI subfamily.

The enzyme catalyses D-ribitol 5-phosphate + CTP + H(+) = CDP-L-ribitol + diphosphate. Its pathway is cell wall biogenesis; poly(ribitol phosphate) teichoic acid biosynthesis. Catalyzes the transfer of the cytidylyl group of CTP to D-ribitol 5-phosphate. This is Ribitol-5-phosphate cytidylyltransferase from Streptococcus pneumoniae (strain ATCC 700669 / Spain 23F-1).